The sequence spans 248 residues: Large ribosomal subunit protein uL4 (248 aa).

A disordered region spans residues 69–92 (HVPRLKNGSRAAKVPQAKGGREAH).

Belongs to the universal ribosomal protein uL4 family. As to quaternary structure, part of the 50S ribosomal subunit.

In terms of biological role, one of the primary rRNA binding proteins, this protein initially binds near the 5'-end of the 23S rRNA. It is important during the early stages of 50S assembly. It makes multiple contacts with different domains of the 23S rRNA in the assembled 50S subunit and ribosome. Forms part of the polypeptide exit tunnel. The sequence is that of Large ribosomal subunit protein uL4 from Methanoregula boonei (strain DSM 21154 / JCM 14090 / 6A8).